Consider the following 89-residue polypeptide: Putative membrane protein insertion efficiency factor (89 aa).

A disordered region spans residues 69–89; the sequence is DPVPPAHTERGGTMCPSRLPE.

The protein belongs to the UPF0161 family.

Its subcellular location is the cell inner membrane. Functionally, could be involved in insertion of integral membrane proteins into the membrane. This is Putative membrane protein insertion efficiency factor from Paramagnetospirillum magneticum (strain ATCC 700264 / AMB-1) (Magnetospirillum magneticum).